Consider the following 346-residue polypeptide: Histone PARylation factor 1 (346 aa).

The residue at position 1 (M1) is an N-acetylmethionine. Residues 1–23 (MVGGGGKRRPGGEGPQCEKTTDV) form a disordered region. K19 is modified (N6-acetyllysine). S97 bears the ADP-ribosylserine mark. Residues K186 and K233 each carry the N6-acetyllysine modification. The residue at position 235 (D235) is a PolyADP-ribosyl aspartic acid. Position 238 is an ADP-ribosyltyrosine (Y238). E240 is subject to PolyADP-ribosyl glutamic acid. Positions 242–346 (PETDADLKRI…SQENIDQLAA (105 aa)) are interaction with PARP1. Residue E284 is the Proton donor of the active site.

This sequence belongs to the HPF1 family. Interacts with PARP1 (via the PARP catalytic domain). Interacts with PARP2 (via the PARP catalytic domain). Interacts with core nucleosomes in a PARP1- and PARP2-dependent manner.

The protein localises to the chromosome. It localises to the nucleus. Cofactor for serine ADP-ribosylation that confers serine specificity on PARP1 and PARP2 and plays a key role in DNA damage response. Initiates the repair of double-strand DNA breaks: recruited to DNA damage sites by PARP1 and PARP2 and switches the amino acid specificity of PARP1 and PARP2 from aspartate or glutamate to serine residues, licensing serine ADP-ribosylation of target proteins. Serine ADP-ribosylation of target proteins, such as histones, promotes decompaction of chromatin and the recruitment of repair factors leading to the reparation of DNA strand breaks. Serine ADP-ribosylation of proteins constitutes the primary form of ADP-ribosylation of proteins in response to DNA damage. HPF1 acts by completing the active site of PARP1 and PARP2: forms a composite active site composed of residues from HPF1 and PARP1 or PARP2. While HPF1 promotes the initiation of serine ADP-ribosylation, it restricts the polymerase activity of PARP1 and PARP2 in order to limit the length of poly-ADP-ribose chains. HPF1 also promotes tyrosine ADP-ribosylation, probably by conferring tyrosine specificity on PARP1. This is Histone PARylation factor 1 from Homo sapiens (Human).